The sequence spans 194 residues: Protein GrpE (194 aa).

The span at 1-14 (MSKMNPNEKKENAS) shows a compositional bias: basic and acidic residues. The interval 1–48 (MSKMNPNEKKENASKNENVNNEEATNLQEEQSNAADEAAGSDNVSGEV) is disordered. Polar residues predominate over residues 24–34 (ATNLQEEQSNA).

Belongs to the GrpE family. In terms of assembly, homodimer.

It localises to the cytoplasm. Participates actively in the response to hyperosmotic and heat shock by preventing the aggregation of stress-denatured proteins, in association with DnaK and GrpE. It is the nucleotide exchange factor for DnaK and may function as a thermosensor. Unfolded proteins bind initially to DnaJ; upon interaction with the DnaJ-bound protein, DnaK hydrolyzes its bound ATP, resulting in the formation of a stable complex. GrpE releases ADP from DnaK; ATP binding to DnaK triggers the release of the substrate protein, thus completing the reaction cycle. Several rounds of ATP-dependent interactions between DnaJ, DnaK and GrpE are required for fully efficient folding. The chain is Protein GrpE from Parabacteroides distasonis (strain ATCC 8503 / DSM 20701 / CIP 104284 / JCM 5825 / NCTC 11152).